The primary structure comprises 371 residues: Putative RNA-binding protein Luc7-like 1 (371 aa).

Coiled coils occupy residues 87-177 and 220-256; these read MDHL…RNSM and QIRE…EERL. The segment covering 232 to 257 has biased composition (basic and acidic residues); the sequence is VAEKQEKRNQDRLRRREEREREERLG. A disordered region spans residues 232–371; the sequence is VAEKQEKRNQ…RSEEKEAGEI (140 aa). Over residues 258-317 the composition is skewed to basic residues; the sequence is RRSGSRTRDRRRSRSRDRRRRRSRSTSRERRKFSRSRSRDRYRRHRSRSRSHSRGHRRAS. Basic and acidic residues-rich tracts occupy residues 318-351 and 361-371; these read RDRS…DWRL and RRSEEKEAGEI. Serine 336 and serine 363 each carry phosphoserine.

It belongs to the Luc7 family.

Its function is as follows. May bind to RNA via its Arg/Ser-rich domain. The sequence is that of Putative RNA-binding protein Luc7-like 1 (Luc7l) from Mus musculus (Mouse).